Consider the following 99-residue polypeptide: Class II hydrophobin 3 (99 aa).

Residues 1–18 form the signal peptide; that stretch reads MRIDILATAALLAQLASA. 3 disulfide bridges follow: C31–C79, C40–C70, and C41–C53.

This sequence belongs to the cerato-ulmin hydrophobin family. As to quaternary structure, homodimer. Homodimers further self-assemble to form highly ordered films at water-air interfaces through intermolecular interactions.

It localises to the secreted. The protein resides in the cell wall. Aerial growth, conidiation, and dispersal of filamentous fungi in the environment rely upon a capability of their secreting small amphipathic proteins called hydrophobins (HPBs) with low sequence identity. Class I can self-assemble into an outermost layer of rodlet bundles on aerial cell surfaces, conferring cellular hydrophobicity that supports fungal growth, development and dispersal; whereas Class II form highly ordered films at water-air interfaces through intermolecular interactions but contribute nothing to the rodlet structure. Hyd3 is a class II hydrophobin required for barley root colonization. Hyd1 and Hyd3 are jointly required for conidial hydrophobicity and dispersal, but seem not to be involved in mycelia hydrophobicity. Inhibits conidial germination in environments not suitable for mycelial growth. Plays probably a role in intraspecific signaling or hyphal fusion. This is Class II hydrophobin 3 from Bionectria ochroleuca (Gliocladium roseum).